A 596-amino-acid chain; its full sequence is Elongation factor 4 (596 aa).

A tr-type G domain is found at 2–184 (KQIRNFSIIA…VIVAKIPPPE (183 aa)). Residues 14 to 19 (DHGKST) and 131 to 134 (NKID) contribute to the GTP site.

The protein belongs to the TRAFAC class translation factor GTPase superfamily. Classic translation factor GTPase family. LepA subfamily.

Its subcellular location is the cell inner membrane. The enzyme catalyses GTP + H2O = GDP + phosphate + H(+). In terms of biological role, required for accurate and efficient protein synthesis under certain stress conditions. May act as a fidelity factor of the translation reaction, by catalyzing a one-codon backward translocation of tRNAs on improperly translocated ribosomes. Back-translocation proceeds from a post-translocation (POST) complex to a pre-translocation (PRE) complex, thus giving elongation factor G a second chance to translocate the tRNAs correctly. Binds to ribosomes in a GTP-dependent manner. The protein is Elongation factor 4 of Shewanella baltica (strain OS155 / ATCC BAA-1091).